Consider the following 497-residue polypeptide: Glucose-6-phosphate isomerase (497 aa).

Glu-350 (proton donor) is an active-site residue. Catalysis depends on residues His-381 and Lys-485.

Belongs to the GPI family.

The protein localises to the cytoplasm. It carries out the reaction alpha-D-glucose 6-phosphate = beta-D-fructose 6-phosphate. Its pathway is carbohydrate biosynthesis; gluconeogenesis. It functions in the pathway carbohydrate degradation; glycolysis; D-glyceraldehyde 3-phosphate and glycerone phosphate from D-glucose: step 2/4. In terms of biological role, catalyzes the reversible isomerization of glucose-6-phosphate to fructose-6-phosphate. This chain is Glucose-6-phosphate isomerase, found in Legionella pneumophila.